The chain runs to 246 residues: 3-oxoacyl-[acyl-carrier-protein] reductase FabG (246 aa).

NADP(+) contacts are provided by residues 11–14, Ser36, 62–63, and Asn89; these read GASR and DV. A substrate-binding site is contributed by Ser141. The active-site Proton acceptor is Tyr154. NADP(+)-binding positions include 154–158 and Ile187; that span reads YVAAK.

The protein belongs to the short-chain dehydrogenases/reductases (SDR) family. Homotetramer.

It catalyses the reaction a (3R)-hydroxyacyl-[ACP] + NADP(+) = a 3-oxoacyl-[ACP] + NADPH + H(+). Its pathway is lipid metabolism; fatty acid biosynthesis. In terms of biological role, catalyzes the NADPH-dependent reduction of beta-ketoacyl-ACP substrates to beta-hydroxyacyl-ACP products, the first reductive step in the elongation cycle of fatty acid biosynthesis. The protein is 3-oxoacyl-[acyl-carrier-protein] reductase FabG (fabG) of Bacillus subtilis (strain 168).